Here is a 551-residue protein sequence, read N- to C-terminus: Solute carrier family 22 member 3 (551 aa).

The chain crosses the membrane as a helical span at residues 21–41; sequence VFLLLCLTGVTFAFLFVGVVF. Residues N72, N99, and N114 are each glycosylated (N-linked (GlcNAc...) asparagine). A helical transmembrane segment spans residues 177-197; it reads LIIYLISCFGVGITGVVVAFA. N-linked (GlcNAc...) asparagine glycosylation occurs at N199. A run of 2 helical transmembrane segments spans residues 236–256 and 264–284; these read IVGI…PGIA and GIQL…WVVP. The Proline-rich sequence motif lies at 284 to 288; sequence PESPR. An N-linked (GlcNAc...) asparagine glycan is attached at N317. A run of 3 helical transmembrane segments spans residues 376 to 396, 464 to 484, and 493 to 513; these read IDFF…LLTI, GVSL…FLLF, and LPLI…MLLP.

It belongs to the major facilitator (TC 2.A.1) superfamily. Organic cation transporter (TC 2.A.1.19) family. Highly expressed in placenta. Highly expressed in kidney cortex. In kidney, expressed specifically in the proximal and distal convoluted tubules and within Bowman capsule. Expressed in brain, particularly in dopaminergic neurons of the substantia nigra compacta, non-aminergic neurons of the ventral tegmental area, substantia nigra reticulata, locus coeruleus, hippocampus and cortex. In brain, also detected in astrocytes in the substantia nigra reticulata, several hypothalamic nuclei and nigrostriatal region. Expressed in neurons and glial cells of amygdala.

It localises to the cell membrane. The protein resides in the apical cell membrane. It is found in the basolateral cell membrane. Its subcellular location is the mitochondrion membrane. The protein localises to the endomembrane system. It localises to the nucleus membrane. The protein resides in the nucleus outer membrane. It catalyses the reaction (R)-noradrenaline(out) = (R)-noradrenaline(in). The catalysed reaction is (R)-adrenaline(out) = (R)-adrenaline(in). It carries out the reaction serotonin(out) = serotonin(in). The enzyme catalyses dopamine(out) = dopamine(in). It catalyses the reaction histamine(out) = histamine(in). The catalysed reaction is tyramine(in) = tyramine(out). It carries out the reaction guanidine(out) = guanidine(in). The enzyme catalyses agmatine(out) = agmatine(in). It catalyses the reaction spermidine(in) = spermidine(out). The catalysed reaction is L-histidyl-L-proline diketopiperazine(in) = L-histidyl-L-proline diketopiperazine(out). It carries out the reaction (R)-salsolinol(in) = (R)-salsolinol(out). In terms of biological role, electrogenic voltage-dependent transporter that mediates the transport of a variety of organic cations such as endogenous bioactive amines, cationic drugs and xenobiotics. Cation cellular uptake or release is driven by the electrochemical potential, i.e. membrane potential and concentration gradient. Functions as a Na(+)- and Cl(-)-independent, bidirectional uniporter. Implicated in monoamine neurotransmitters uptake such as dopamine, adrenaline/epinephrine, noradrenaline/norepinephrine, homovanillic acid, histamine, serotonin and tyramine, thereby supporting a role in homeostatic regulation of aminergic neurotransmission in the brain. Transports dopaminergic neuromodulators cyclo(his-pro) and salsolinol with low efficiency. May be involved in the uptake and disposition of cationic compounds by renal clearance from the blood flow. May contribute to regulate the transport of cationic compounds in testis across the blood-testis-barrier. Mediates the transport of polyamine spermidine and putrescine. Mediates the bidirectional transport of polyamine agmatine. Also transports guanidine. May also mediate intracellular transport of organic cations, thereby playing a role in amine metabolism and intracellular signaling. This chain is Solute carrier family 22 member 3, found in Mus musculus (Mouse).